We begin with the raw amino-acid sequence, 400 residues long: Putative zinc-binding protein ORF78 (400 aa).

The disordered stretch occupies residues 9-33 (LPRKRRAVAQPRTRQPPPKVHREDT).

In Ictalurid herpesvirus 1 (strain Auburn) (IcHV-1), this protein is Putative zinc-binding protein ORF78 (ORF78).